The chain runs to 295 residues: MQGRKAMLVLHGKQAMNEDVRSAVGDLRDSGWVLDVRVTWEAGDAQRLVAEALAAGYSHIVAGGGDGTLRDVAEAMGLAATQASLALLPLGTANDFAKAAGIPLEPASALALLNVAPQPIDLGQAGDQLFLNMATGGFGSQVTANTSEDLKKVLGAAAYLFTGLSRFSELQAASVELQGPGFHWQGDLLALGIGNGRQAGGGQVLCPEAMVNDGLLDVAILPAPQEVVGALRDLLGGDGLFVRARLPWVEIKSSQGLDINLDGEPLQAANLRFQARPAALHLHLPAGSPLLSHPG.

One can recognise a DAGKc domain in the interval 1–129; sequence MQGRKAMLVL…IDLGQAGDQL (129 aa). Residues threonine 39, 65 to 71, and threonine 92 contribute to the ATP site; that span reads GDGTLRD. Mg(2+) contacts are provided by methionine 210, aspartate 213, and leucine 215. Glutamate 264 functions as the Proton acceptor in the catalytic mechanism.

It belongs to the diacylglycerol/lipid kinase family. YegS lipid kinase subfamily. Requires Mg(2+) as cofactor. Ca(2+) is required as a cofactor.

Its subcellular location is the cytoplasm. Its function is as follows. Probably phosphorylates lipids; the in vivo substrate is unknown. The protein is Probable lipid kinase YegS-like of Pseudomonas putida (strain ATCC 47054 / DSM 6125 / CFBP 8728 / NCIMB 11950 / KT2440).